Here is a 277-residue protein sequence, read N- to C-terminus: Large ribosomal subunit protein uL2 (277 aa).

The tract at residues 222 to 277 is disordered; it reads GVAMNPVDHPHGGGEGRTSGGRHPVTPWGKPTKGKKTRSNKATDKFIMRSRHQRKK.

Belongs to the universal ribosomal protein uL2 family. Part of the 50S ribosomal subunit. Forms a bridge to the 30S subunit in the 70S ribosome.

In terms of biological role, one of the primary rRNA binding proteins. Required for association of the 30S and 50S subunits to form the 70S ribosome, for tRNA binding and peptide bond formation. It has been suggested to have peptidyltransferase activity; this is somewhat controversial. Makes several contacts with the 16S rRNA in the 70S ribosome. In Brucella melitensis biotype 1 (strain ATCC 23456 / CCUG 17765 / NCTC 10094 / 16M), this protein is Large ribosomal subunit protein uL2.